The sequence spans 434 residues: Glutamyl-tRNA reductase (434 aa).

Substrate is bound by residues 49–52 (TCNR), Ser109, 114–116 (EPQ), and Gln120. Residue Cys50 is the Nucleophile of the active site. 189–194 (GAGEMC) lines the NADP(+) pocket.

Belongs to the glutamyl-tRNA reductase family. As to quaternary structure, homodimer.

The catalysed reaction is (S)-4-amino-5-oxopentanoate + tRNA(Glu) + NADP(+) = L-glutamyl-tRNA(Glu) + NADPH + H(+). It participates in porphyrin-containing compound metabolism; protoporphyrin-IX biosynthesis; 5-aminolevulinate from L-glutamyl-tRNA(Glu): step 1/2. Its function is as follows. Catalyzes the NADPH-dependent reduction of glutamyl-tRNA(Glu) to glutamate 1-semialdehyde (GSA). In Geobacter sulfurreducens (strain ATCC 51573 / DSM 12127 / PCA), this protein is Glutamyl-tRNA reductase.